Reading from the N-terminus, the 354-residue chain is Guanine nucleotide-binding protein G(i) subunit alpha-3 (354 aa).

A lipid anchor (N-myristoyl glycine) is attached at Gly-2. The S-palmitoyl cysteine moiety is linked to residue Cys-3. A G-alpha domain is found at 32 to 354 (KEVKLLLLGA…KNNLKECGLY (323 aa)). Positions 35–48 (KLLLLGAGESGKST) are G1 motif. The GTP site is built by Gly-42, Glu-43, Ser-44, Gly-45, Lys-46, Ser-47, Thr-48, Asp-150, Ser-151, Leu-175, Arg-176, Thr-177, Arg-178, Val-179, Lys-180, Thr-181, Val-201, and Gly-203. 6 residues coordinate GDP: Glu-43, Ser-44, Gly-45, Lys-46, Ser-47, and Thr-48. Ser-47 contributes to the Mg(2+) binding site. GDP contacts are provided by Ser-151, Leu-175, Arg-176, Thr-177, and Arg-178. A G2 motif region spans residues 173–181 (DVLRTRVKT). Arg-178 is subject to ADP-ribosylarginine; by cholera toxin. Thr-181 is a binding site for Mg(2+). Residues 196–205 (FKMFDVGGQR) form a G3 motif region. Gln-204 is modified (deamidated glutamine; by Photorhabdus PAU_02230). Residues 265–272 (ILFLNKKD) form a G4 motif region. Residues Asn-269, Lys-270, Asp-272, Leu-273, Cys-325, Ala-326, and Thr-327 each coordinate GTP. GDP-binding residues include Asn-269, Lys-270, and Asp-272. Positions 324 to 329 (TCATDT) are G5 motif. GDP-binding residues include Cys-325 and Ala-326. ADP-ribosylcysteine; by pertussis toxin is present on Cys-351.

It belongs to the G-alpha family. G(i/o/t/z) subfamily. Heterotrimeric G proteins are composed of 3 units; alpha, beta and gamma. The alpha subunit contains the guanine nucleotide binding site. GTP binding causes dissociation of the heterotrimer, liberating the individual subunits so that they can interact with downstream effector proteins. Forms a complex with CCDC88A/GIV and EGFR which leads to enhanced EGFR signaling and triggering of cell migration; ligand stimulation is required for recruitment of GNAI3 to the complex. Interacts (inactive GDP-bound form) with CCDC88A/GIV (via GBA motif); the interaction leads to activation of GNAI3. Interacts (inactive GDP-bound form) with CCDC88C/DAPLE (via GBA motif); the interaction leads to activation of GNAI3. Interacts (inactive GDP-bound form) with NUCB1 (via GBA motif) and NUCB2 (via GBA motif); the interaction leads to activation of GNAI3. Interacts (inactive GDP-bound form) with PLCD4 (via GBA motif); the interaction leads to activation of GNAI3. Interacts with INSR; the interaction is probably mediated by CCDC88A/GIV. Interacts with GPSM1. Interacts (GDP-bound form) with GPSM2 (via GoLoco domains). Does not interact with RGS2. Interacts with RGS8 and RGS10; this strongly enhances the intrinsic GTPase activity. Interacts with RGS16; this strongly enhances the intrinsic GTPase activity. Interacts with RGS12. Interacts (via active GTP- or inactive GDP-bound form) with RGS14. Interacts (via active GTP-bound form) with TRPC5 (via ANK repeats) in a homotetrameric ion channel; the interaction is direct and activates the channel activity. Post-translationally, (Microbial infection) Deamidated at Gln-204 by Photorhabdus asymbiotica toxin PAU_02230, blocking GTP hydrolysis of heterotrimeric GNAQ or GNA11 and G-alphai (GNAI1, GNAI2 or GNAI3) proteins, thereby activating RhoA.

The protein localises to the cytoplasm. The protein resides in the cell membrane. It is found in the cytoskeleton. It localises to the microtubule organizing center. Its subcellular location is the centrosome. Heterotrimeric guanine nucleotide-binding proteins (G proteins) function as transducers downstream of G protein-coupled receptors (GPCRs) in numerous signaling cascades. The alpha chain contains the guanine nucleotide binding site and alternates between an active, GTP-bound state and an inactive, GDP-bound state. Signaling by an activated GPCR promotes GDP release and GTP binding. The alpha subunit has a low GTPase activity that converts bound GTP to GDP, thereby terminating the signal. Both GDP release and GTP hydrolysis are modulated by numerous regulatory proteins. Signaling is mediated via effector proteins, such as adenylate cyclase. Inhibits adenylate cyclase activity, leading to decreased intracellular cAMP levels. Stimulates the activity of receptor-regulated K(+) channels. The active GTP-bound form prevents the association of RGS14 with centrosomes and is required for the translocation of RGS14 from the cytoplasm to the plasma membrane. May play a role in cell division. The active GTP-bound form activates the calcium permeant TRPC5 ion channels. This is Guanine nucleotide-binding protein G(i) subunit alpha-3 (GNAI3) from Homo sapiens (Human).